The chain runs to 553 residues: Probable malate:quinone oxidoreductase (553 aa).

Residues 534-543 are compositionally biased toward low complexity; that stretch reads QLKPQVQPQP. The segment at 534-553 is disordered; the sequence is QLKPQVQPQPAHKAVADIAL.

This sequence belongs to the MQO family. FAD serves as cofactor.

The catalysed reaction is (S)-malate + a quinone = a quinol + oxaloacetate. The protein operates within carbohydrate metabolism; tricarboxylic acid cycle; oxaloacetate from (S)-malate (quinone route): step 1/1. This chain is Probable malate:quinone oxidoreductase, found in Citrobacter koseri (strain ATCC BAA-895 / CDC 4225-83 / SGSC4696).